The primary structure comprises 310 residues: Homoserine kinase (310 aa).

ATP is bound at residue 91–101 (PIGSGLGSSAC).

The protein belongs to the GHMP kinase family. Homoserine kinase subfamily.

The protein localises to the cytoplasm. It carries out the reaction L-homoserine + ATP = O-phospho-L-homoserine + ADP + H(+). Its pathway is amino-acid biosynthesis; L-threonine biosynthesis; L-threonine from L-aspartate: step 4/5. Its function is as follows. Catalyzes the ATP-dependent phosphorylation of L-homoserine to L-homoserine phosphate. This Escherichia coli (strain K12 / MC4100 / BW2952) protein is Homoserine kinase.